The sequence spans 218 residues: Adenylate kinase (218 aa).

10–15 contacts ATP; the sequence is GAGKGT. The segment at 30-59 is NMP; that stretch reads STGDMLRAAVKAGTPLGLEAKKVMDAGGLV. Residues threonine 31, arginine 36, 57–59, 85–88, and glutamine 92 each bind AMP; these read GLV and GFPR. The interval 122 to 159 is LID; that stretch reads GRRVHPASGRVYHTKYNPPKVEGKDDETGDELVQRDDD. ATP contacts are provided by residues arginine 123 and 132-133; that span reads VY. A disordered region spans residues 139-160; it reads PPKVEGKDDETGDELVQRDDDQ. 2 residues coordinate AMP: arginine 156 and arginine 167. Residue glycine 203 coordinates ATP.

Belongs to the adenylate kinase family. As to quaternary structure, monomer.

It localises to the cytoplasm. It carries out the reaction AMP + ATP = 2 ADP. It participates in purine metabolism; AMP biosynthesis via salvage pathway; AMP from ADP: step 1/1. Its function is as follows. Catalyzes the reversible transfer of the terminal phosphate group between ATP and AMP. Plays an important role in cellular energy homeostasis and in adenine nucleotide metabolism. The sequence is that of Adenylate kinase from Alcanivorax borkumensis (strain ATCC 700651 / DSM 11573 / NCIMB 13689 / SK2).